A 216-amino-acid chain; its full sequence is MDSNSRLMTFRRREMVEKLKLSGIADNRVLAAFLSVERHRFFDKESQEYAYADGAYPIGYGQTISQPYTVACMTSLLVERSPSGKVLEIGTGSGYQAAILYALGYRVYTIERVVELSEKAEKLFSALGFSIMCRSGDGTLGWPEEAPFDGIMVTAGAPHCPETLLHQLALDGSLVVPIGAHGLQKMTVFQRKKDRFEKEVFSDFAFVPLIGREGWG.

Ser-65 is a catalytic residue.

This sequence belongs to the methyltransferase superfamily. L-isoaspartyl/D-aspartyl protein methyltransferase family.

The protein localises to the cytoplasm. The enzyme catalyses [protein]-L-isoaspartate + S-adenosyl-L-methionine = [protein]-L-isoaspartate alpha-methyl ester + S-adenosyl-L-homocysteine. Catalyzes the methyl esterification of L-isoaspartyl residues in peptides and proteins that result from spontaneous decomposition of normal L-aspartyl and L-asparaginyl residues. It plays a role in the repair and/or degradation of damaged proteins. This chain is Protein-L-isoaspartate O-methyltransferase, found in Chlorobium phaeobacteroides (strain DSM 266 / SMG 266 / 2430).